The sequence spans 330 residues: G-protein coupled receptor 3 (330 aa).

The Extracellular segment spans residues 1–42; sequence MMWGAGSPLAWLSAGSGNVNVSSVGPAEGPTGPAAPLPSPKA. Asn20 carries N-linked (GlcNAc...) asparagine glycosylation. A helical membrane pass occupies residues 43-62; it reads WDVVLCISGTLVSCENALVV. Topologically, residues 63 to 74 are cytoplasmic; that stretch reads AIIVGTPAFRAP. A helical transmembrane segment spans residues 75 to 98; the sequence is MFLLVGSLAVADLLAGLGLVLHFA. Residues 99-110 lie on the Extracellular side of the membrane; the sequence is AVFCIGSAEMSL. The chain crosses the membrane as a helical span at residues 111–132; it reads VLVGVLAMAFTASIGSLLAITV. The Cytoplasmic segment spans residues 133–153; it reads DRYLSLYNALTYYSETTVTRT. The helical transmembrane segment at 154–173 threads the bilayer; the sequence is YVMLALVWGGALGLGLLPVL. Topologically, residues 174–198 are extracellular; it reads AWNCLDGLTTCGVVYPLSKNHLVVL. A helical membrane pass occupies residues 199 to 217; it reads AIAFFMVFGIMLQLYAQIC. At 218–245 the chain is on the cytoplasmic side; it reads RIVCRHAQQIALQRHLLPASHYVATRKG. A helical transmembrane segment spans residues 246 to 272; it reads IATLAVVLGAFAACWLPFTVYCLLGDA. Over 273 to 277 the chain is Extracellular; the sequence is HSPPL. A helical membrane pass occupies residues 278 to 299; sequence YTYLTLLPATYNSMINPIIYAF. Topologically, residues 300 to 330 are cytoplasmic; the sequence is RNQDVQKVLWAVCCCCSSSKIPFRSRSPSDV. The S-palmitoyl cysteine moiety is linked to residue Cys313. Ser324, Ser326, and Ser328 each carry phosphoserine.

This sequence belongs to the G-protein coupled receptor 1 family. In terms of tissue distribution, expressed predominantly in the central nervous system, and at low levels in the lung, kidney, testis, ovary and eye. Highly expressed in regions of the brain implicated in the Alzheimer disease.

The protein resides in the cell membrane. Functionally, constitutively active G-protein coupled receptor that maintains high 3'-5'-cyclic adenosine monophosphate (cAMP) levels that a plays a role in serveral processes including meiotic arrest in oocytes or neuronal development via activation of numerous intracellular signaling pathways. Acts as an essential activator of thermogenic adipocytes and drives thermogenesis via its intrinsic G(s)-coupling activity without the requirement of a ligand. Has a potential role in modulating a number of brain functions, including behavioral responses to stress, amyloid-beta peptide generation in neurons. Stimulates neurite outgrowth in cerebellar granular neurons modulated via PKA, ERK, and most strongly PI3K-mediated signaling pathways. This is G-protein coupled receptor 3 (GPR3) from Homo sapiens (Human).